The sequence spans 808 residues: Ribosome biogenesis protein BOP1 homolog (808 aa).

2 stretches are compositionally biased toward low complexity: residues M1 to C25 and A33 to D50. The disordered stretch occupies residues M1–D55. WD repeat units lie at residues G430–R469, K640–K680, S682–K720, S724–K766, and K777–E808.

Belongs to the WD repeat BOP1/ERB1 family.

Its subcellular location is the nucleus. It localises to the nucleolus. The protein localises to the nucleoplasm. Required for maturation of ribosomal RNAs and formation of the large ribosomal subunit. The sequence is that of Ribosome biogenesis protein BOP1 homolog from Leishmania major.